The primary structure comprises 361 residues: Chalcone synthase A (361 aa).

The active site involves C168.

It belongs to the thiolase-like superfamily. Chalcone/stilbene synthases family.

It carries out the reaction (E)-4-coumaroyl-CoA + 3 malonyl-CoA + 3 H(+) = 2',4,4',6'-tetrahydroxychalcone + 3 CO2 + 4 CoA. It functions in the pathway secondary metabolite biosynthesis; flavonoid biosynthesis. Its function is as follows. The primary product of this enzyme is 4,2',4',6'-tetrahydroxychalcone (also termed naringenin-chalcone or chalcone) which can under specific conditions spontaneously isomerize into naringenin. The chain is Chalcone synthase A (CHSA) from Ipomoea cordatotriloba (Tievine).